The sequence spans 428 residues: Light-independent protochlorophyllide reductase subunit N (428 aa).

Residues cysteine 29, cysteine 54, and cysteine 115 each contribute to the [4Fe-4S] cluster site.

It belongs to the BchN/ChlN family. As to quaternary structure, protochlorophyllide reductase is composed of three subunits; BchL, BchN and BchB. Forms a heterotetramer of two BchB and two BchN subunits. [4Fe-4S] cluster is required as a cofactor.

The catalysed reaction is chlorophyllide a + oxidized 2[4Fe-4S]-[ferredoxin] + 2 ADP + 2 phosphate = protochlorophyllide a + reduced 2[4Fe-4S]-[ferredoxin] + 2 ATP + 2 H2O. It participates in porphyrin-containing compound metabolism; bacteriochlorophyll biosynthesis (light-independent). Component of the dark-operative protochlorophyllide reductase (DPOR) that uses Mg-ATP and reduced ferredoxin to reduce ring D of protochlorophyllide (Pchlide) to form chlorophyllide a (Chlide). This reaction is light-independent. The NB-protein (BchN-BchB) is the catalytic component of the complex. The sequence is that of Light-independent protochlorophyllide reductase subunit N from Cereibacter sphaeroides (strain KD131 / KCTC 12085) (Rhodobacter sphaeroides).